A 137-amino-acid chain; its full sequence is Actin-depolymerizing factor 7 (137 aa).

Position 6 is a phosphoserine (Ser6). In terms of domain architecture, ADF-H spans 7–137 (GMAVEDECKL…SFDIIKSRAL (131 aa)).

It belongs to the actin-binding proteins ADF family. Specifically expressed in pollen.

Its subcellular location is the cytoplasm. It is found in the cytoskeleton. In terms of biological role, actin-depolymerizing protein. Severs actin filaments (F-actin) and binds to actin monomers. Binds monomeric actin (G-actin) with a marked preference for the ADP-loaded form and inhibits the rate of nucleotide exchange on G-actin. Required for pollen tube growth. Promotes turnover of longitudinal actin cables by severing actin filaments in pollen tubes. The polypeptide is Actin-depolymerizing factor 7 (ADF7) (Arabidopsis thaliana (Mouse-ear cress)).